The following is a 165-amino-acid chain: MLILGIDPGTAIMGYGLIEKKGNRLFPVDYACWRTPAHTPMPERLLMLYHEIEAYIKEKQPHHVAVEELFFNRNTTTAISVGQARGVVLLAAAQCGLPVYEYTPLQVKQAVAGYGRADKQQIQQMVRALLGLQEIPKPDDTADALAIAICHAHSVNLLNRMGGAL.

Residues Asp-7, Glu-67, and Asp-140 contribute to the active site. Mg(2+)-binding residues include Asp-7, Glu-67, and Asp-140.

It belongs to the RuvC family. In terms of assembly, homodimer which binds Holliday junction (HJ) DNA. The HJ becomes 2-fold symmetrical on binding to RuvC with unstacked arms; it has a different conformation from HJ DNA in complex with RuvA. In the full resolvosome a probable DNA-RuvA(4)-RuvB(12)-RuvC(2) complex forms which resolves the HJ. The cofactor is Mg(2+).

The protein localises to the cytoplasm. The enzyme catalyses Endonucleolytic cleavage at a junction such as a reciprocal single-stranded crossover between two homologous DNA duplexes (Holliday junction).. Its function is as follows. The RuvA-RuvB-RuvC complex processes Holliday junction (HJ) DNA during genetic recombination and DNA repair. Endonuclease that resolves HJ intermediates. Cleaves cruciform DNA by making single-stranded nicks across the HJ at symmetrical positions within the homologous arms, yielding a 5'-phosphate and a 3'-hydroxyl group; requires a central core of homology in the junction. The consensus cleavage sequence is 5'-(A/T)TT(C/G)-3'. Cleavage occurs on the 3'-side of the TT dinucleotide at the point of strand exchange. HJ branch migration catalyzed by RuvA-RuvB allows RuvC to scan DNA until it finds its consensus sequence, where it cleaves and resolves the cruciform DNA. This chain is Crossover junction endodeoxyribonuclease RuvC, found in Desulfitobacterium hafniense (strain DSM 10664 / DCB-2).